The primary structure comprises 598 residues: Polypeptide N-acetylgalactosaminyltransferase 17 (598 aa).

Residues 1–6 lie on the Cytoplasmic side of the membrane; the sequence is MASLRR. A helical; Signal-anchor for type II membrane protein membrane pass occupies residues 7–27; that stretch reads VKVLLVLNLIAVAGFVLFLAK. The Lumenal portion of the chain corresponds to 28–598; that stretch reads CRPIAVRSGD…QRWTIKNSIK (571 aa). A glycan (N-linked (GlcNAc...) asparagine) is linked at asparagine 50. 2 disulfides stabilise this stretch: cysteine 142–cysteine 373 and cysteine 364–cysteine 443. The tract at residues 151–262 is catalytic subdomain A; that stretch reads LPQISIIFIF…AGWAEPVLSR (112 aa). Substrate-binding residues include aspartate 192 and arginine 223. 3 residues coordinate Mn(2+): aspartate 246, histidine 248, and histidine 378. Positions 319–381 are catalytic subdomain B; the sequence is PIRTPAMIGC…PCSRVAHIER (63 aa). Substrate is bound by residues arginine 381 and tyrosine 386. 2 N-linked (GlcNAc...) asparagine glycosylation sites follow: asparagine 461 and asparagine 486. The Ricin B-type lectin domain occupies 465-594; it reads AYGELRNNKA…SCTGQRWTIK (130 aa). Intrachain disulfides connect cysteine 478/cysteine 494, cysteine 526/cysteine 541, and cysteine 568/cysteine 586.

Belongs to the glycosyltransferase 2 family. GalNAc-T subfamily. It depends on Mn(2+) as a cofactor. In terms of tissue distribution, highly expressed in brain and heart. Weakly expressed in kidney, liver, lung and spleen.

It localises to the golgi apparatus membrane. The enzyme catalyses L-seryl-[protein] + UDP-N-acetyl-alpha-D-galactosamine = a 3-O-[N-acetyl-alpha-D-galactosaminyl]-L-seryl-[protein] + UDP + H(+). It catalyses the reaction L-threonyl-[protein] + UDP-N-acetyl-alpha-D-galactosamine = a 3-O-[N-acetyl-alpha-D-galactosaminyl]-L-threonyl-[protein] + UDP + H(+). The protein operates within protein modification; protein glycosylation. Functionally, may catalyze the initial reaction in O-linked oligosaccharide biosynthesis, the transfer of an N-acetyl-D-galactosamine residue to a serine or threonine residue on the protein receptor. The polypeptide is Polypeptide N-acetylgalactosaminyltransferase 17 (Homo sapiens (Human)).